The sequence spans 344 residues: Arginase 2, chloroplastic/mitochondrial (344 aa).

Residues 1-26 (MWKIGQRGVPYFQRLIAAPFTTLRSL) constitute a chloroplast and mitochondrion transit peptide. Residues His-163, Asp-187, His-189, and Asp-191 each contribute to the Mn(2+) site. Residues 189–193 (HPDIY), 197–199 (EGN), and Asn-228 each bind substrate. Mn(2+) contacts are provided by Asp-272 and Asp-274. Residue Glu-315 participates in substrate binding.

It belongs to the arginase family. Requires Mn(2+) as cofactor. In terms of tissue distribution, expressed in vasculature of roots, root tips, leaves and cotyledons.

The protein localises to the mitochondrion. Its subcellular location is the plastid. It localises to the chloroplast. The catalysed reaction is L-arginine + H2O = urea + L-ornithine. It catalyses the reaction agmatine + H2O = urea + putrescine. It participates in nitrogen metabolism; urea cycle; L-ornithine and urea from L-arginine: step 1/1. The protein operates within amine and polyamine biosynthesis; putrescine biosynthesis via agmatine pathway; putrescine from agmatine: step 1/1. Its function is as follows. Catalyzes the hydrolysis of L-arginine to urea and L-ornithine. The latter can be utilized in the urea cycle or as a precursor for the synthesis of both polyamines and proline. Possesses agmatinase activity. Catalyzes the formation of putrescine from agmatine. In Arabidopsis thaliana (Mouse-ear cress), this protein is Arginase 2, chloroplastic/mitochondrial (ARGAH2).